The following is a 367-amino-acid chain: Heme A synthase (367 aa).

The next 5 membrane-spanning stretches (helical) occupy residues 25-45 (AIRI…LVGG), 111-131 (FLAR…VLTG), 137-157 (LWLP…IGWW), 174-194 (LATH…FMRA), and 211-231 (LAGL…LVAG). His274 contacts heme. 3 helical membrane passes run 276–296 (LGAY…LRAA), 305–325 (SVVL…TLLL), and 327–347 (VPLH…GFAI). Residue His335 coordinates heme.

It belongs to the COX15/CtaA family. Type 2 subfamily. In terms of assembly, interacts with CtaB. Heme b is required as a cofactor.

Its subcellular location is the cell membrane. The enzyme catalyses Fe(II)-heme o + 2 A + H2O = Fe(II)-heme a + 2 AH2. Its pathway is porphyrin-containing compound metabolism; heme A biosynthesis; heme A from heme O: step 1/1. Functionally, catalyzes the conversion of heme O to heme A by two successive hydroxylations of the methyl group at C8. The first hydroxylation forms heme I, the second hydroxylation results in an unstable dihydroxymethyl group, which spontaneously dehydrates, resulting in the formyl group of heme A. This is Heme A synthase from Rhizobium rhizogenes (strain K84 / ATCC BAA-868) (Agrobacterium radiobacter).